The primary structure comprises 476 residues: Bifunctional protein HldE (476 aa).

The interval 1 to 319 (MKVSLPAFEK…EALALHHGES (319 aa)) is ribokinase. 195 to 198 (NMSE) lines the ATP pocket. The active site involves Asp264. The cytidylyltransferase stretch occupies residues 345–476 (MTNGCFDILH…AIIQNIMAKQ (132 aa)).

This sequence in the N-terminal section; belongs to the carbohydrate kinase PfkB family. In the C-terminal section; belongs to the cytidylyltransferase family. As to quaternary structure, homodimer.

It carries out the reaction D-glycero-beta-D-manno-heptose 7-phosphate + ATP = D-glycero-beta-D-manno-heptose 1,7-bisphosphate + ADP + H(+). It catalyses the reaction D-glycero-beta-D-manno-heptose 1-phosphate + ATP + H(+) = ADP-D-glycero-beta-D-manno-heptose + diphosphate. It participates in nucleotide-sugar biosynthesis; ADP-L-glycero-beta-D-manno-heptose biosynthesis; ADP-L-glycero-beta-D-manno-heptose from D-glycero-beta-D-manno-heptose 7-phosphate: step 1/4. The protein operates within nucleotide-sugar biosynthesis; ADP-L-glycero-beta-D-manno-heptose biosynthesis; ADP-L-glycero-beta-D-manno-heptose from D-glycero-beta-D-manno-heptose 7-phosphate: step 3/4. Catalyzes the phosphorylation of D-glycero-D-manno-heptose 7-phosphate at the C-1 position to selectively form D-glycero-beta-D-manno-heptose-1,7-bisphosphate. In terms of biological role, catalyzes the ADP transfer from ATP to D-glycero-beta-D-manno-heptose 1-phosphate, yielding ADP-D-glycero-beta-D-manno-heptose. This chain is Bifunctional protein HldE, found in Shewanella sp. (strain ANA-3).